A 280-amino-acid chain; its full sequence is Secreted RxLR effector protein 39 (280 aa).

Residues Met-1–Ala-19 form the signal peptide. The RxLR-dEER motif lies at Arg-49–Arg-70. The tract at residues Glu-229–Gly-249 is disordered.

Belongs to the RxLR effector family.

The protein resides in the secreted. It localises to the host nucleus. Its function is as follows. Secreted effector that completely suppresses the host cell death induced by cell death-inducing proteins. The polypeptide is Secreted RxLR effector protein 39 (Plasmopara viticola (Downy mildew of grapevine)).